Here is a 469-residue protein sequence, read N- to C-terminus: Protein POLLENLESS 3-LIKE 1 (469 aa).

Residues 1-20 (MRRRESRGAKGGGFLTPPPS) are disordered. 3 TPR repeats span residues 88–121 (DSAL…CPFE), 124–157 (DSID…LEQD), and 184–217 (ARIL…EPDN). Positions 139–191 (RITEVAELLEHKLRTLEQDKHYGGRIKIAKRSHEEQNNKTIEQEKARILGNLA) form a coiled coil. Residues 314 to 338 (NIHKTNSHASSESVEQNSPGLTTQP) are compositionally biased toward polar residues. Positions 314–339 (NIHKTNSHASSESVEQNSPGLTTQPR) are disordered.

Belongs to the MS5 protein family. Expressed in floral and vegetative organs. Also barely detectable in leaves and stems.

The protein localises to the nucleus. Functionally, probably involved in the regulation of cell division. The polypeptide is Protein POLLENLESS 3-LIKE 1 (Arabidopsis thaliana (Mouse-ear cress)).